A 283-amino-acid polypeptide reads, in one-letter code: Aspartate dehydrogenase domain-containing protein (283 aa).

Phosphoserine is present on residues Ser-20 and Ser-168.

It belongs to the L-aspartate dehydrogenase family.

This is Aspartate dehydrogenase domain-containing protein from Homo sapiens (Human).